Here is a 221-residue protein sequence, read N- to C-terminus: GTP cyclohydrolase III (221 aa).

The protein belongs to the archaeal-type GTP cyclohydrolase family.

The enzyme catalyses GTP + 3 H2O = 2-amino-5-formylamino-6-(5-phospho-D-ribosylamino)pyrimidin-4(3H)-one + 2 phosphate + 2 H(+). Functionally, catalyzes the formation of 2-amino-5-formylamino-6-ribofuranosylamino-4(3H)-pyrimidinone ribonucleotide monophosphate and inorganic phosphate from GTP. Also has an independent pyrophosphate phosphohydrolase activity. The polypeptide is GTP cyclohydrolase III (Pyrobaculum calidifontis (strain DSM 21063 / JCM 11548 / VA1)).